Consider the following 499-residue polypeptide: Lysine--tRNA ligase (499 aa).

Mg(2+)-binding residues include E403 and E410.

The protein belongs to the class-II aminoacyl-tRNA synthetase family. As to quaternary structure, homodimer. Mg(2+) serves as cofactor.

The protein localises to the cytoplasm. It catalyses the reaction tRNA(Lys) + L-lysine + ATP = L-lysyl-tRNA(Lys) + AMP + diphosphate. The protein is Lysine--tRNA ligase of Campylobacter hominis (strain ATCC BAA-381 / DSM 21671 / CCUG 45161 / LMG 19568 / NCTC 13146 / CH001A).